Reading from the N-terminus, the 2067-residue chain is Non-reducing polyketide synthase PKS12 (2067 aa).

Residues Phe4 to His241 are N-terminal acylcarrier protein transacylase (SAT) domain. Residues Asn350–Asn373 are disordered. The segment covering Ala356–Asn373 has biased composition (polar residues). The 436-residue stretch at Asn373 to Asp808 folds into the Ketosynthase family 3 (KS3) domain. Active-site for beta-ketoacyl synthase activity residues include Cys545, His680, and His725. The malonyl-CoA:ACP transacylase (MAT) domain stretch occupies residues Phe912 to Ser1199. The active-site For acyl/malonyl transferase activity is Ser1001. The N-terminal hotdog fold stretch occupies residues Gln1297 to Gln1433. One can recognise a PKS/mFAS DH domain in the interval Gln1297 to Asn1606. Catalysis depends on His1329, which acts as the Proton acceptor; for dehydratase activity. The interval His1329–Val1604 is product template (PT) domain. The tract at residues Leu1460 to Asn1606 is C-terminal hotdog fold. The active-site Proton donor; for dehydratase activity is the Asp1519. The segment at Ala1619–Thr1648 is disordered. One can recognise a Carrier domain in the interval Thr1660–Asp1738. O-(pantetheine 4'-phosphoryl)serine is present on Ser1698. Positions Lys1742 to Ser1779 are disordered. A compositionally biased stretch (low complexity) spans Ser1743–Ser1754. The segment at Ser1781–Leu2065 is claisen cyclase domain. The For Claisen cyclase activity role is filled by Ser1875.

The enzyme catalyses 6 malonyl-CoA + acetyl-CoA + 6 H(+) = naphtopyrone YWA1 + 6 CO2 + 7 CoA + H2O. It participates in pigment biosynthesis. Its function is as follows. Non-reducing polyketide synthase; part of the gene cluster that mediates the biosynthesis of aurofusarin, a red mycelium pigment which is acting as a mycotoxin. The first step is performed by the polyketide synthase which condenses one acetyl-CoA and 6 malonyl-CoA units to form the first intermediate, the cyclic heptaketide and yellow pigment YWA1. The C2 hydroxyl group in the pyrone ring of YWA1 is probably formed during ring closure by an aldol-type cyclization reaction. The dehydratase aurZ then acts as the first tailoring enzyme in the aurofusarin biosynthetic pathway by converting YWA1 to nor-rubrofusarin. Nor-rubrofusarin is then methylated to rubrofusarin by the O-methyltransferase aurJ. Rubrofusarin is then transported across the plasma membrane by the rubrofusarin-specific pump aurT for further enzymatic processing by the extracellular complex composed of GIP1, aurF, aurO and aurS to yield aurofusarin. The protein is Non-reducing polyketide synthase PKS12 of Gibberella zeae (strain ATCC MYA-4620 / CBS 123657 / FGSC 9075 / NRRL 31084 / PH-1) (Wheat head blight fungus).